A 476-amino-acid chain; its full sequence is Glycogen synthase (476 aa).

Residue lysine 15 coordinates ADP-alpha-D-glucose.

This sequence belongs to the glycosyltransferase 1 family. Bacterial/plant glycogen synthase subfamily.

It carries out the reaction [(1-&gt;4)-alpha-D-glucosyl](n) + ADP-alpha-D-glucose = [(1-&gt;4)-alpha-D-glucosyl](n+1) + ADP + H(+). It participates in glycan biosynthesis; glycogen biosynthesis. In terms of biological role, synthesizes alpha-1,4-glucan chains using ADP-glucose. This is Glycogen synthase from Streptococcus agalactiae serotype III (strain NEM316).